The sequence spans 610 residues: Synaptotagmin-like protein 3 (610 aa).

One can recognise a RabBD domain in the interval 4-123 (EIDLSALKEL…IKTGEWFYEE (120 aa)). Residues 219–239 (RQCVGQTERRSQSDTAVNVTT) form a disordered region. C2 domains are found at residues 306–428 (VTGE…TQSF) and 462–603 (RPRK…NLWT).

In terms of assembly, monomer. Binds NRXN1. Binds RAB27A that has been activated by GTP-binding via its N-terminus.

It is found in the endomembrane system. Functionally, may act as Rab effector protein and play a role in vesicle trafficking. Binds phospholipids in the presence of calcium ions. In Homo sapiens (Human), this protein is Synaptotagmin-like protein 3 (SYTL3).